We begin with the raw amino-acid sequence, 428 residues long: Glutamyl-tRNA reductase (428 aa).

Residues 49 to 52 (TCNR), serine 109, 114 to 116 (EGQ), and glutamine 120 each bind substrate. Cysteine 50 (nucleophile) is an active-site residue. 189-194 (GAGKMS) lines the NADP(+) pocket.

The protein belongs to the glutamyl-tRNA reductase family. As to quaternary structure, homodimer.

It carries out the reaction (S)-4-amino-5-oxopentanoate + tRNA(Glu) + NADP(+) = L-glutamyl-tRNA(Glu) + NADPH + H(+). It functions in the pathway porphyrin-containing compound metabolism; protoporphyrin-IX biosynthesis; 5-aminolevulinate from L-glutamyl-tRNA(Glu): step 1/2. The protein operates within porphyrin-containing compound metabolism; chlorophyll biosynthesis. Catalyzes the NADPH-dependent reduction of glutamyl-tRNA(Glu) to glutamate 1-semialdehyde (GSA). The protein is Glutamyl-tRNA reductase of Trichormus variabilis (strain ATCC 29413 / PCC 7937) (Anabaena variabilis).